A 120-amino-acid chain; its full sequence is Methylglyoxal synthase (120 aa).

Positions 1–120 (MRIALIAHDN…TAEILVESVL (120 aa)) constitute an MGS-like domain. Substrate-binding positions include H8, K12, and 54 to 55 (SG). The active-site Proton donor/acceptor is the D60. H87 serves as a coordination point for substrate.

This sequence belongs to the methylglyoxal synthase family.

It carries out the reaction dihydroxyacetone phosphate = methylglyoxal + phosphate. In terms of biological role, catalyzes the formation of methylglyoxal from dihydroxyacetone phosphate. This chain is Methylglyoxal synthase, found in Natranaerobius thermophilus (strain ATCC BAA-1301 / DSM 18059 / JW/NM-WN-LF).